Reading from the N-terminus, the 138-residue chain is Putative nickel-responsive regulator (138 aa).

Residues H76, H87, H89, and C95 each contribute to the Ni(2+) site.

The protein belongs to the transcriptional regulatory CopG/NikR family. Requires Ni(2+) as cofactor.

In terms of biological role, transcriptional regulator. This Pseudomonas putida (strain ATCC 47054 / DSM 6125 / CFBP 8728 / NCIMB 11950 / KT2440) protein is Putative nickel-responsive regulator.